Consider the following 510-residue polypeptide: Monocarboxylate transporter 14 (510 aa).

The Cytoplasmic portion of the chain corresponds to 1–27 (MYTSHEDIGYDFEDGPKDKKTLKPHPN). A run of 6 helical transmembrane segments spans residues 28–48 (IDGG…ILIM), 74–94 (WVSS…GLFI), 103–123 (AIIG…AANV), 127–147 (FITF…PAVV), 159–179 (LAQG…TVLL), and 191–209 (AMLI…GALM). The interval 214-255 (PGKNPNDPGEKDVRGLPAHSTESVKSTGQQGRTEEKDGGLGN) is disordered. Residues 233 to 244 (STESVKSTGQQG) are compositionally biased toward polar residues. 6 helical membrane passes run 315-335 (MFVA…IPFI), 353-373 (FPLT…LGVI), 379-399 (ISVW…IFIL), 408-428 (LAVI…MPVV), 443-463 (GIII…AGWI), and 474-494 (FYIC…QPCI). Over 495 to 510 (RIIEQSRRKYMDGAHV) the chain is Cytoplasmic.

Belongs to the major facilitator superfamily. Monocarboxylate porter (TC 2.A.1.13) family.

The protein resides in the cell membrane. Its function is as follows. Proton-linked monocarboxylate transporter. May catalyze the transport of monocarboxylates across the plasma membrane. In Homo sapiens (Human), this protein is Monocarboxylate transporter 14 (SLC16A14).